The sequence spans 208 residues: Glutathione S-transferase (208 aa).

Residues 1 to 78 form the GST N-terminal domain; the sequence is MSYKLTYFPI…HLARKFNLNG (78 aa). Residues Tyr7, Lys42, 49 to 50, and 62 to 63 each bind glutathione; these read QL and QS. Residues 80–200 form the GST C-terminal domain; that stretch reads NNAETSYVDM…YCAKRNASKM (121 aa).

The protein belongs to the GST superfamily. Pi family. As to quaternary structure, homodimer.

It catalyses the reaction RX + glutathione = an S-substituted glutathione + a halide anion + H(+). In terms of biological role, conjugation of reduced glutathione to a wide number of exogenous and endogenous hydrophobic electrophiles. This Dirofilaria immitis (Canine heartworm) protein is Glutathione S-transferase.